A 301-amino-acid polypeptide reads, in one-letter code: Homoserine O-acetyltransferase (301 aa).

Cysteine 142 serves as the catalytic Acyl-thioester intermediate. Residues lysine 163 and serine 192 each coordinate substrate. Histidine 235 functions as the Proton acceptor in the catalytic mechanism. Glutamate 237 is a catalytic residue. Arginine 249 is a substrate binding site.

The protein belongs to the MetA family.

Its subcellular location is the cytoplasm. It catalyses the reaction L-homoserine + acetyl-CoA = O-acetyl-L-homoserine + CoA. The protein operates within amino-acid biosynthesis; L-methionine biosynthesis via de novo pathway; O-acetyl-L-homoserine from L-homoserine: step 1/1. Transfers an acetyl group from acetyl-CoA to L-homoserine, forming acetyl-L-homoserine. This is Homoserine O-acetyltransferase from Bacillus cereus (strain AH187).